A 179-amino-acid polypeptide reads, in one-letter code: Ribosome maturation factor RimM (179 aa).

The PRC barrel domain maps to 97-170; the sequence is DGELSWNFFV…LITVELPEGL (74 aa).

The protein belongs to the RimM family. Binds ribosomal protein uS19.

The protein resides in the cytoplasm. Its function is as follows. An accessory protein needed during the final step in the assembly of 30S ribosomal subunit, possibly for assembly of the head region. Essential for efficient processing of 16S rRNA. May be needed both before and after RbfA during the maturation of 16S rRNA. It has affinity for free ribosomal 30S subunits but not for 70S ribosomes. The polypeptide is Ribosome maturation factor RimM (Bacteroides thetaiotaomicron (strain ATCC 29148 / DSM 2079 / JCM 5827 / CCUG 10774 / NCTC 10582 / VPI-5482 / E50)).